Consider the following 292-residue polypeptide: AKT-interacting protein (292 aa).

A disordered region spans residues 1 to 64 (MNPFWNMSSA…ISPSPSVQPT (64 aa)). The segment covering 14 to 23 (KRSDNDEKIA) has biased composition (basic and acidic residues). The region spanning 75–223 (YLEYSLLAEF…VVDSVKLCNS (149 aa)) is the UBC core domain. The tract at residues 273 to 292 (SWVKPGSVLPFSKEENSLQT) is disordered.

It belongs to the ubiquitin-conjugating enzyme family. FTS subfamily.

It localises to the cytoplasm. The protein resides in the cell membrane. Its function is as follows. May function to promote vesicle trafficking and/or fusion. May also regulate apoptosis. The sequence is that of AKT-interacting protein (aktip) from Xenopus tropicalis (Western clawed frog).